The sequence spans 252 residues: Coenzyme F420:L-glutamate ligase (252 aa).

GTP is bound by residues 12–15 (VPLE), 44–45 (HT), and K49. Position 114 (D114) interacts with a divalent metal cation. GTP is bound at residue N117. Residues D155, T156, and Q213 each contribute to the a divalent metal cation site. 211 to 218 (MGQADEGT) lines the GTP pocket.

This sequence belongs to the CofE family. As to quaternary structure, homodimer. It depends on Mg(2+) as a cofactor. The cofactor is Mn(2+). K(+) is required as a cofactor.

The catalysed reaction is oxidized coenzyme F420-0 + GTP + L-glutamate = oxidized coenzyme F420-1 + GDP + phosphate + H(+). It carries out the reaction oxidized coenzyme F420-1 + GTP + L-glutamate = oxidized coenzyme F420-2 + GDP + phosphate + H(+). It participates in cofactor biosynthesis; coenzyme F420 biosynthesis. Functionally, catalyzes the GTP-dependent successive addition of two or more gamma-linked L-glutamates to the L-lactyl phosphodiester of 7,8-didemethyl-8-hydroxy-5-deazariboflavin (F420-0) to form coenzyme F420-0-glutamyl-glutamate (F420-2) or polyglutamated F420 derivatives. The polypeptide is Coenzyme F420:L-glutamate ligase (Methanopyrus kandleri (strain AV19 / DSM 6324 / JCM 9639 / NBRC 100938)).